A 381-amino-acid polypeptide reads, in one-letter code: uncharacterized protein (381 aa).

A helical transmembrane segment spans residues 3–23; the sequence is GAVAGLVFLAVLVIFAIIVVA.

Belongs to the band 7/mec-2 family.

It is found in the membrane. This is an uncharacterized protein from Mycobacterium bovis (strain ATCC BAA-935 / AF2122/97).